The chain runs to 274 residues: Thiamine kinase (274 aa).

The protein belongs to the thiamine kinase family.

The catalysed reaction is thiamine + ATP = thiamine phosphate + ADP + H(+). Its pathway is cofactor biosynthesis; thiamine diphosphate biosynthesis; thiamine phosphate from thiamine: step 1/1. In terms of biological role, catalyzes the ATP-dependent phosphorylation of thiamine to thiamine phosphate. Is involved in thiamine salvage. The polypeptide is Thiamine kinase (Shigella sonnei (strain Ss046)).